The sequence spans 325 residues: Lactonase drp35 (325 aa).

Ca(2+) is bound by residues glutamate 46, serine 108, glycine 110, glutamate 128, threonine 131, tyrosine 133, aspartate 136, asparagine 183, aspartate 234, and serine 235. Residue aspartate 234 is the Proton donor of the active site.

Belongs to the SMP-30/CGR1 family. Requires Ca(2+) as cofactor.

The protein resides in the cytoplasm. In terms of biological role, exhibits lactonase activity. Acts in cells with perturbed membrane integrity and is possibly related to the membrane homeostasis. In Staphylococcus haemolyticus (strain JCSC1435), this protein is Lactonase drp35 (drp35).